A 537-amino-acid chain; its full sequence is 5,6-dihydroxyindole-2-carboxylic acid oxidase (537 aa).

The first 24 residues, 1 to 24 (MSAPKLLSLGCIFFPLLLFQQARA), serve as a signal peptide directing secretion. Residues 25-477 (QFPRQCATVE…WPSREFSVPE (453 aa)) lie on the Lumenal, melanosome side of the membrane. Cystine bridges form between Cys30/Cys41, Cys42/Cys65, Cys56/Cys99, Cys101/Cys110, and Cys113/Cys122. Asn96 and Asn104 each carry an N-linked (GlcNAc...) asparagine glycan. The N-linked (GlcNAc...) asparagine glycan is linked to Asn181. Zn(2+) contacts are provided by His192, His215, and His224. Disulfide bonds link Cys258–Cys261 and Cys290–Cys303. Asn304 and Asn350 each carry an N-linked (GlcNAc...) asparagine glycan. Zn(2+) contacts are provided by His377 and His381. A glycan (N-linked (GlcNAc...) asparagine) is linked at Asn385. His404 is a Zn(2+) binding site. A helical membrane pass occupies residues 478–501 (IIAIAVVGALLLVALIFGTASYLI). Topologically, residues 502–537 (RARRSMDEANQPLLTDQYQCYAEEYEKLQNPNQSVV) are cytoplasmic.

Belongs to the tyrosinase family. As to quaternary structure, monomer. Interacts with ATP7A. Interacts with SLC45A2. Cu(2+) is required as a cofactor. Zn(2+) serves as cofactor. In terms of processing, glycosylated. Pigment cells.

The protein resides in the melanosome membrane. The catalysed reaction is 2 5,6-dihydroxyindole-2-carboxylate + O2 = 2 indole-5,6-quinone-2-carboxylate + 2 H2O. The protein operates within pigment biosynthesis; melanin biosynthesis. The activity depends critically on the nature of the bound metal ion. Catalyzes the oxidation of 5,6-dihydroxyindole-2-carboxylic acid (DHICA) in the presence of bound Cu(2+) ions, but lacks activity in the presence of bound Zn(2+) ions. Functionally, plays a role in melanin biosynthesis. Catalyzes the oxidation of 5,6-dihydroxyindole-2-carboxylic acid (DHICA) into indole-5,6-quinone-2-carboxylic acid in the presence of bound Cu(2+) ions, but not in the presence of Zn(2+). May regulate or influence the type of melanin synthesized. Also to a lower extent, capable of hydroxylating tyrosine and producing melanin. This Homo sapiens (Human) protein is 5,6-dihydroxyindole-2-carboxylic acid oxidase.